A 355-amino-acid polypeptide reads, in one-letter code: Holliday junction branch migration complex subunit RuvB (355 aa).

Residues 4–190 (TDKLAAERII…FGIVARLEFY (187 aa)) form a large ATPase domain (RuvB-L) region. Residues Leu29, Arg30, Gly71, Lys74, Thr75, Thr76, 137 to 139 (EDY), Arg180, Tyr190, and Arg227 each bind ATP. Position 75 (Thr75) interacts with Mg(2+). A small ATPAse domain (RuvB-S) region spans residues 191 to 261 (DAEQLSRIVR…VADAALAMLD (71 aa)). Residues 264 to 355 (PVGFDLMDRK…GSMWNTPDGA (92 aa)) are head domain (RuvB-H). DNA-binding residues include Arg300, Arg319, and Arg324.

Belongs to the RuvB family. As to quaternary structure, homohexamer. Forms an RuvA(8)-RuvB(12)-Holliday junction (HJ) complex. HJ DNA is sandwiched between 2 RuvA tetramers; dsDNA enters through RuvA and exits via RuvB. An RuvB hexamer assembles on each DNA strand where it exits the tetramer. Each RuvB hexamer is contacted by two RuvA subunits (via domain III) on 2 adjacent RuvB subunits; this complex drives branch migration. In the full resolvosome a probable DNA-RuvA(4)-RuvB(12)-RuvC(2) complex forms which resolves the HJ.

The protein resides in the cytoplasm. It catalyses the reaction ATP + H2O = ADP + phosphate + H(+). Functionally, the RuvA-RuvB-RuvC complex processes Holliday junction (HJ) DNA during genetic recombination and DNA repair, while the RuvA-RuvB complex plays an important role in the rescue of blocked DNA replication forks via replication fork reversal (RFR). RuvA specifically binds to HJ cruciform DNA, conferring on it an open structure. The RuvB hexamer acts as an ATP-dependent pump, pulling dsDNA into and through the RuvAB complex. RuvB forms 2 homohexamers on either side of HJ DNA bound by 1 or 2 RuvA tetramers; 4 subunits per hexamer contact DNA at a time. Coordinated motions by a converter formed by DNA-disengaged RuvB subunits stimulates ATP hydrolysis and nucleotide exchange. Immobilization of the converter enables RuvB to convert the ATP-contained energy into a lever motion, pulling 2 nucleotides of DNA out of the RuvA tetramer per ATP hydrolyzed, thus driving DNA branch migration. The RuvB motors rotate together with the DNA substrate, which together with the progressing nucleotide cycle form the mechanistic basis for DNA recombination by continuous HJ branch migration. Branch migration allows RuvC to scan DNA until it finds its consensus sequence, where it cleaves and resolves cruciform DNA. This chain is Holliday junction branch migration complex subunit RuvB, found in Burkholderia vietnamiensis (strain G4 / LMG 22486) (Burkholderia cepacia (strain R1808)).